A 399-amino-acid polypeptide reads, in one-letter code: MAREKFERNKPHVNIGTIGHVDHGKTTLTAAITNVLAKKGQAEVQNYADIDGAPEERERGITINTAHVEYETETRHYAHVDCPGHADYVKNMITGAAQMDGAILVCAATDGPMAQTKEHILLAKQVGVPALVVALNKCDMVDDEEIIELVEMEIRELLSSYDFPGDDIPVVQVSGLKAIEGEAEWEAKIEELMAAVDSSIPEPEREVDKPFLMAVEDVFSITGRGTVATGRIERGIVKVGEEIEIVGIKDTRKTTVTGVEMFRKLLDEGMAGDNVGLLLRGIQKEDIERGMVLVKPGSITPHTKFEGQVYVLKKEEGGRHTPFFAGYRPQFYIRTTDVTGQITAFTAEDGSNVEMVMPGDNIQMTGELICPVAIEQGMRFAIREGGRTIGAGVVSKIIE.

One can recognise a tr-type G domain in the interval 10–204 (KPHVNIGTIG…AVDSSIPEPE (195 aa)). Positions 19-26 (GHVDHGKT) are G1. 19-26 (GHVDHGKT) provides a ligand contact to GTP. Thr26 is a binding site for Mg(2+). The segment at 60–64 (GITIN) is G2. Residues 81–84 (DCPG) form a G3 region. GTP contacts are provided by residues 81–85 (DCPGH) and 136–139 (NKCD). The tract at residues 136–139 (NKCD) is G4. Residues 174–176 (SGL) are G5.

The protein belongs to the TRAFAC class translation factor GTPase superfamily. Classic translation factor GTPase family. EF-Tu/EF-1A subfamily. Monomer.

It is found in the cytoplasm. The catalysed reaction is GTP + H2O = GDP + phosphate + H(+). In terms of biological role, GTP hydrolase that promotes the GTP-dependent binding of aminoacyl-tRNA to the A-site of ribosomes during protein biosynthesis. The protein is Elongation factor Tu of Synechococcus sp. (strain CC9605).